The sequence spans 216 residues: Acyl-homoserine-lactone synthase (216 aa).

The protein belongs to the autoinducer synthase family.

The catalysed reaction is a fatty acyl-[ACP] + S-adenosyl-L-methionine = an N-acyl-L-homoserine lactone + S-methyl-5'-thioadenosine + holo-[ACP] + H(+). Required for the synthesis of OHHL (N-(3-oxohexanoyl)-L-homoserine lactone), an autoinducer molecule which binds to a yet uncharacterized transcriptional regulator. The chain is Acyl-homoserine-lactone synthase (eagI) from Enterobacter agglomerans (Erwinia herbicola).